Here is a 319-residue protein sequence, read N- to C-terminus: Type II methyltransferase M.MpnI (319 aa).

It belongs to the N(4)/N(6)-methyltransferase family.

The catalysed reaction is a 2'-deoxyadenosine in DNA + S-adenosyl-L-methionine = an N(6)-methyl-2'-deoxyadenosine in DNA + S-adenosyl-L-homocysteine + H(+). Its function is as follows. A methylase that recognizes the double-stranded sequence 5'-CTAT-3' and methylates A-3 on one strand; probably responsible for all of the methylation on this site in the genome. This chain is Type II methyltransferase M.MpnI, found in Mycoplasma pneumoniae (strain ATCC 29342 / M129 / Subtype 1) (Mycoplasmoides pneumoniae).